Reading from the N-terminus, the 460-residue chain is MESSFHFINEALLITQTFITFHQFLVASACVLIAVFGYYFFKPRCIIYLIDFSCYQPPDFLRAPVSNFIEHLTISGVFDQESLDLQQKILERSGISDDASVPATVHEIPPNASISAAREETHEILFAIVQDLFSKHEIDPKSIDILVSNCSLFCPSPSITSMIINKFGMRSDIKSFSLSGMGCSAGILSVNLVKDLMKIHGDSLALVLSMEAVSPNGYRGKCKSMLIANTIFRMGGAAILLSNRKQDSHKAKYKLQHIIRTHVGSDTESYESVMQQVDEEGKVGVALSKQLVRVASKALKINVVQLGPRVLPYSEQLKYIISFIQRKWGMHKEIYTPNFKKAFEHFCIHAGGRAIIEGVEKHLKLDKEDVEASRSTLYRYGNTSSSSLWYELQYLEAKGRMKMGDKVWQIGFGSGFKANSAVWKCISEIDSRGRNAWSDRIHLYPVCGDTSSALKTELLS.

The helical transmembrane segment at 21–41 (FHQFLVASACVLIAVFGYYFF) threads the bilayer. One can recognise an FAE domain in the interval 38 to 328 (YYFFKPRCII…YIISFIQRKW (291 aa)). Catalysis depends on residues Cys-183, His-262, His-345, His-349, and Asn-382.

This sequence belongs to the thiolase-like superfamily. Chalcone/stilbene synthases family. As to expression, expressed in flowers.

The protein localises to the membrane. The catalysed reaction is a very-long-chain acyl-CoA + malonyl-CoA + H(+) = a very-long-chain 3-oxoacyl-CoA + CO2 + CoA. Its pathway is lipid metabolism; fatty acid biosynthesis. This Arabidopsis thaliana (Mouse-ear cress) protein is 3-ketoacyl-CoA synthase 7.